Consider the following 144-residue polypeptide: Small ribosomal subunit protein uS12 (144 aa).

Positions 1-55 (MPTINQLVRKGREDKVVKSKSPALQKGYNSFKKSQTNQSSPQKRGVCTRVGTMTP) are disordered. A compositionally biased stretch (polar residues) spans 27–42 (GYNSFKKSQTNQSSPQ). D102 is modified (3-methylthioaspartic acid). A disordered region spans residues 119–144 (GVNNRKQGRSKYGTKRPKPGQAAAKK). Residues 124–144 (KQGRSKYGTKRPKPGQAAAKK) show a composition bias toward basic residues.

This sequence belongs to the universal ribosomal protein uS12 family. In terms of assembly, part of the 30S ribosomal subunit. Contacts proteins S8 and S17. May interact with IF1 in the 30S initiation complex.

In terms of biological role, with S4 and S5 plays an important role in translational accuracy. Functionally, interacts with and stabilizes bases of the 16S rRNA that are involved in tRNA selection in the A site and with the mRNA backbone. Located at the interface of the 30S and 50S subunits, it traverses the body of the 30S subunit contacting proteins on the other side and probably holding the rRNA structure together. The combined cluster of proteins S8, S12 and S17 appears to hold together the shoulder and platform of the 30S subunit. The polypeptide is Small ribosomal subunit protein uS12 (Brevibacillus brevis (strain 47 / JCM 6285 / NBRC 100599)).